Consider the following 226-residue polypeptide: ATP synthase subunit a (226 aa).

The next 5 helical transmembrane spans lie at 18–38, 74–94, 100–120, 162–182, and 187–207; these read LSLN…TYWL, FVSL…PYIF, LTLT…YGWI, LTAN…TGPM, and IILS…SAVA.

The protein belongs to the ATPase A chain family. F-type ATPases have 2 components, CF(1) - the catalytic core - and CF(0) - the membrane proton channel. CF(1) has five subunits: alpha(3), beta(3), gamma(1), delta(1), epsilon(1). CF(0) has three main subunits: a, b and c.

The protein resides in the mitochondrion inner membrane. In terms of biological role, mitochondrial membrane ATP synthase (F(1)F(0) ATP synthase or Complex V) produces ATP from ADP in the presence of a proton gradient across the membrane which is generated by electron transport complexes of the respiratory chain. F-type ATPases consist of two structural domains, F(1) - containing the extramembraneous catalytic core and F(0) - containing the membrane proton channel, linked together by a central stalk and a peripheral stalk. During catalysis, ATP synthesis in the catalytic domain of F(1) is coupled via a rotary mechanism of the central stalk subunits to proton translocation. Key component of the proton channel; it may play a direct role in the translocation of protons across the membrane. The protein is ATP synthase subunit a of Aedes aegypti (Yellowfever mosquito).